A 207-amino-acid polypeptide reads, in one-letter code: 2,3-bisphosphoglycerate-dependent phosphoglycerate mutase (207 aa).

Substrate-binding positions include 9-16 (RHGQSDWN), 22-23 (TG), Arg-61, 88-91 (ERDY), Lys-99, 115-116 (RR), and 159-160 (GN). Residue His-10 is the Tele-phosphohistidine intermediate of the active site. Catalysis depends on Glu-88, which acts as the Proton donor/acceptor.

It belongs to the phosphoglycerate mutase family. BPG-dependent PGAM subfamily. Homodimer.

The catalysed reaction is (2R)-2-phosphoglycerate = (2R)-3-phosphoglycerate. It participates in carbohydrate degradation; glycolysis; pyruvate from D-glyceraldehyde 3-phosphate: step 3/5. Its function is as follows. Catalyzes the interconversion of 2-phosphoglycerate and 3-phosphoglycerate. The polypeptide is 2,3-bisphosphoglycerate-dependent phosphoglycerate mutase (Beijerinckia indica subsp. indica (strain ATCC 9039 / DSM 1715 / NCIMB 8712)).